The primary structure comprises 89 residues: uncharacterized protein (89 aa).

The segment at Thr-31–Val-89 is disordered. Over residues Glu-36–Arg-58 the composition is skewed to basic and acidic residues. Over residues Asn-59–Val-69 the composition is skewed to pro residues.

This is an uncharacterized protein from Dictyostelium discoideum (Social amoeba).